The sequence spans 134 residues: MSWQAYVDDHLMCDIEGHEGHRLTAAAIVGHDGSVWAQSATFPQFKPEEMNGIMTDFNEPGHLAPTGLHLGGTKYMVIQGEAGAVIRGKKGSGGITIKKTGQALVFGIYEESVTPGQCNMVVERLGDYLLEQGL.

Cysteines 13 and 118 form a disulfide. The Involved in PIP2 interaction motif lies at 84–100; sequence AVIRGKKGSGGITIKKT. Threonine 114 carries the phosphothreonine modification.

It belongs to the profilin family. In terms of assembly, occurs in many kinds of cells as a complex with monomeric actin in a 1:1 ratio. In terms of processing, phosphorylated by MAP kinases.

The protein resides in the cytoplasm. It localises to the cytoskeleton. In terms of biological role, binds to actin and affects the structure of the cytoskeleton. At high concentrations, profilin prevents the polymerization of actin, whereas it enhances it at low concentrations. This is Profilin-1 from Olea europaea (Common olive).